A 699-amino-acid polypeptide reads, in one-letter code: Long-chain-fatty-acid--CoA ligase 1 (699 aa).

An N-acetylmethionine modification is found at Met1. Tyr9 bears the 3'-nitrotyrosine mark. The helical; Signal-anchor for type III membrane protein transmembrane segment at 25–45 (LPTNTLMGFGAFAALTTFWYA) threads the bilayer. Over 46–699 (TRPKALKPPC…IDELYSTIKI (654 aa)) the chain is Cytoplasmic. Tyr85 is subject to Phosphotyrosine. Tyr86 carries the 3'-nitrotyrosine modification. An O-linked (GlcNAc) serine glycan is attached at Ser136. Lys208, Lys357, and Lys387 each carry N6-acetyllysine. At Ser621 the chain carries Phosphoserine. Lys633 is modified (N6-acetyllysine).

This sequence belongs to the ATP-dependent AMP-binding enzyme family. Mg(2+) is required as a cofactor. As to expression, liver, heart, epididymal adipose and to a lesser extent brain, small intestine and lung.

The protein resides in the mitochondrion outer membrane. It is found in the peroxisome membrane. It localises to the microsome membrane. The protein localises to the endoplasmic reticulum membrane. The catalysed reaction is a long-chain fatty acid + ATP + CoA = a long-chain fatty acyl-CoA + AMP + diphosphate. The enzyme catalyses (5Z,8Z,11Z,14Z)-eicosatetraenoate + ATP + CoA = (5Z,8Z,11Z,14Z)-eicosatetraenoyl-CoA + AMP + diphosphate. It catalyses the reaction 3,7,11,15-tetramethylhexadecanoate + ATP + CoA = phytanoyl-CoA + AMP + diphosphate. It carries out the reaction hexadecanoate + ATP + CoA = hexadecanoyl-CoA + AMP + diphosphate. The catalysed reaction is (E)-hexadec-2-enoate + ATP + CoA = (2E)-hexadecenoyl-CoA + AMP + diphosphate. The enzyme catalyses 2,6,10,14-tetramethylpentadecanoate + ATP + CoA = pristanoyl-CoA + AMP + diphosphate. It catalyses the reaction 14,15-epoxy-(5Z,8Z,11Z)-eicosatrienoate + ATP + CoA = 14,15-epoxy-(5Z,8Z,11Z)-eicosatrienoyl-CoA + AMP + diphosphate. It carries out the reaction 5-hydroxy-(6E,8Z,11Z,14Z)-eicosatetraenoate + ATP + CoA = 5-hydroxy-(6E,8Z,11Z,14Z)-eicosatetraenoyl-CoA + AMP + diphosphate. The catalysed reaction is 12-hydroxy-(5Z,8Z,10E,14Z)-eicosatetraenoate + ATP + CoA = 12-hydroxy-(5Z,8Z,10E,14Z)-eicosatetraenoyl-CoA + AMP + diphosphate. The enzyme catalyses 15-hydroxy-(5Z,8Z,11Z,13E)-eicosatetraenoate + ATP + CoA = 15-hydroxy-(5Z,8Z,11Z,13E)-eicosatetraenoyl-CoA + AMP + diphosphate. It catalyses the reaction (9Z)-octadecenoate + ATP + CoA = (9Z)-octadecenoyl-CoA + AMP + diphosphate. With respect to regulation, inhibited at high temperature and by arachidonate. Functionally, catalyzes the conversion of long-chain fatty acids to their active form acyl-CoAs for both synthesis of cellular lipids, and degradation via beta-oxidation. Preferentially uses palmitoleate, oleate and linoleate. Preferentially activates arachidonate than epoxyeicosatrienoic acids (EETs) or hydroxyeicosatrienoic acids (HETEs). This is Long-chain-fatty-acid--CoA ligase 1 from Rattus norvegicus (Rat).